Reading from the N-terminus, the 514-residue chain is ATP synthase subunit alpha (514 aa).

169-176 lines the ATP pocket; it reads GDRQTGKT.

Belongs to the ATPase alpha/beta chains family. F-type ATPases have 2 components, CF(1) - the catalytic core - and CF(0) - the membrane proton channel. CF(1) has five subunits: alpha(3), beta(3), gamma(1), delta(1), epsilon(1). CF(0) has three main subunits: a(1), b(2) and c(9-12). The alpha and beta chains form an alternating ring which encloses part of the gamma chain. CF(1) is attached to CF(0) by a central stalk formed by the gamma and epsilon chains, while a peripheral stalk is formed by the delta and b chains.

It is found in the cell membrane. The enzyme catalyses ATP + H2O + 4 H(+)(in) = ADP + phosphate + 5 H(+)(out). Functionally, produces ATP from ADP in the presence of a proton gradient across the membrane. The alpha chain is a regulatory subunit. This Buchnera aphidicola subsp. Baizongia pistaciae (strain Bp) protein is ATP synthase subunit alpha.